Here is a 103-residue protein sequence, read N- to C-terminus: Pyrimidine/purine nucleoside phosphorylase (103 aa).

The protein belongs to the nucleoside phosphorylase PpnP family.

The catalysed reaction is a purine D-ribonucleoside + phosphate = a purine nucleobase + alpha-D-ribose 1-phosphate. The enzyme catalyses adenosine + phosphate = alpha-D-ribose 1-phosphate + adenine. It catalyses the reaction cytidine + phosphate = cytosine + alpha-D-ribose 1-phosphate. It carries out the reaction guanosine + phosphate = alpha-D-ribose 1-phosphate + guanine. The catalysed reaction is inosine + phosphate = alpha-D-ribose 1-phosphate + hypoxanthine. The enzyme catalyses thymidine + phosphate = 2-deoxy-alpha-D-ribose 1-phosphate + thymine. It catalyses the reaction uridine + phosphate = alpha-D-ribose 1-phosphate + uracil. It carries out the reaction xanthosine + phosphate = alpha-D-ribose 1-phosphate + xanthine. Functionally, catalyzes the phosphorolysis of diverse nucleosides, yielding D-ribose 1-phosphate and the respective free bases. Can use uridine, adenosine, guanosine, cytidine, thymidine, inosine and xanthosine as substrates. Also catalyzes the reverse reactions. This chain is Pyrimidine/purine nucleoside phosphorylase, found in Shewanella baltica (strain OS195).